The chain runs to 487 residues: Acetyl-coenzyme A carboxylase carboxyl transferase subunit beta, chloroplastic (487 aa).

The CoA carboxyltransferase N-terminal domain maps to 223–487 (LWIQCDNCYG…FCPLNKTEIK (265 aa)). The Zn(2+) site is built by Cys227, Cys230, Cys243, and Cys246. A C4-type zinc finger spans residues 227–246 (CDNCYGLMYKKVKMNVCEQC).

This sequence belongs to the AccD/PCCB family. In terms of assembly, acetyl-CoA carboxylase is a heterohexamer composed of biotin carboxyl carrier protein, biotin carboxylase and 2 subunits each of ACCase subunit alpha and ACCase plastid-coded subunit beta (accD). It depends on Zn(2+) as a cofactor.

It is found in the plastid. It localises to the chloroplast stroma. The enzyme catalyses N(6)-carboxybiotinyl-L-lysyl-[protein] + acetyl-CoA = N(6)-biotinyl-L-lysyl-[protein] + malonyl-CoA. It participates in lipid metabolism; malonyl-CoA biosynthesis; malonyl-CoA from acetyl-CoA: step 1/1. In terms of biological role, component of the acetyl coenzyme A carboxylase (ACC) complex. Biotin carboxylase (BC) catalyzes the carboxylation of biotin on its carrier protein (BCCP) and then the CO(2) group is transferred by the transcarboxylase to acetyl-CoA to form malonyl-CoA. The chain is Acetyl-coenzyme A carboxylase carboxyl transferase subunit beta, chloroplastic from Nasturtium officinale (Watercress).